The primary structure comprises 97 residues: Mapk-regulated corepressor-interacting protein 1 (97 aa).

A disordered region spans residues 1-29 (MTSSPVSRVVYNGKRNSSPRSPTNSSEIF). The segment covering 15-26 (RNSSPRSPTNSS) has biased composition (low complexity). Phosphoserine is present on Ser-21. Thr-30 carries the post-translational modification Phosphothreonine. Tyr-41 carries the post-translational modification Phosphotyrosine. Lys-79 bears the N6-acetyllysine mark. A PXDLS motif motif is present at residues 80 to 84 (PIDLS).

The protein belongs to the MCRIP family. Interacts (unphosphorylated form, via the PXDLS motif) with CTBP1, competitively inhibiting CTBP-ZEB1 interaction. Interacts with CTBP2. Interacts with MCRIP2. Interacts with DDX6. Phosphorylation by MAPK3/1 (ERK1/2) regulates MCRIP1 binding to CTBP(s). Widely expressed (at protein level).

It localises to the nucleus. The protein localises to the cytoplasm. It is found in the stress granule. Its function is as follows. The phosphorylation status of MCRIP1 functions as a molecular switch to regulate epithelial-mesenchymal transition. Unphosphorylated MCRIP1 binds to and inhibits the transcriptional corepressor CTBP(s). When phosphorylated by MAPK/ERK, MCRIP1 releases CTBP(s) resulting in transcriptional silencing of the E-cadherin gene and induction of epithelial-mesenchymal transition. This chain is Mapk-regulated corepressor-interacting protein 1 (Mcrip1), found in Mus musculus (Mouse).